The sequence spans 727 residues: Polyribonucleotide nucleotidyltransferase (727 aa).

2 residues coordinate Mg(2+): aspartate 488 and aspartate 494. The KH domain occupies 555-614; that stretch reads PKLYTMKINPEKIRDVIGKGGATIRALTDETGCQINIEEDGTITIAATEAAKADEAKRRI. The S1 motif domain occupies 624–692; that stretch reads GKVYEGPVTK…DKGRVKLSMK (69 aa). Residues 691-727 form a disordered region; sequence MKALADRPAGDSGRPAPAERGERRERRDGGASEQQQQ. The span at 707-720 shows a compositional bias: basic and acidic residues; it reads PAERGERRERRDGG.

Belongs to the polyribonucleotide nucleotidyltransferase family. Requires Mg(2+) as cofactor.

The protein localises to the cytoplasm. The enzyme catalyses RNA(n+1) + phosphate = RNA(n) + a ribonucleoside 5'-diphosphate. In terms of biological role, involved in mRNA degradation. Catalyzes the phosphorolysis of single-stranded polyribonucleotides processively in the 3'- to 5'-direction. The sequence is that of Polyribonucleotide nucleotidyltransferase from Acidovorax ebreus (strain TPSY) (Diaphorobacter sp. (strain TPSY)).